The primary structure comprises 158 residues: SsrA-binding protein (158 aa).

The protein belongs to the SmpB family.

It is found in the cytoplasm. In terms of biological role, required for rescue of stalled ribosomes mediated by trans-translation. Binds to transfer-messenger RNA (tmRNA), required for stable association of tmRNA with ribosomes. tmRNA and SmpB together mimic tRNA shape, replacing the anticodon stem-loop with SmpB. tmRNA is encoded by the ssrA gene; the 2 termini fold to resemble tRNA(Ala) and it encodes a 'tag peptide', a short internal open reading frame. During trans-translation Ala-aminoacylated tmRNA acts like a tRNA, entering the A-site of stalled ribosomes, displacing the stalled mRNA. The ribosome then switches to translate the ORF on the tmRNA; the nascent peptide is terminated with the 'tag peptide' encoded by the tmRNA and targeted for degradation. The ribosome is freed to recommence translation, which seems to be the essential function of trans-translation. This Pseudoalteromonas atlantica (strain T6c / ATCC BAA-1087) protein is SsrA-binding protein.